The chain runs to 146 residues: Hemoglobin subunit beta (146 aa).

Residues 2–146 (QWTAEEKQLI…VAHALARKYH (145 aa)) form the Globin domain. H63 and H92 together coordinate heme b.

It belongs to the globin family. Heterotetramer of two alpha chains and two beta chains. In terms of tissue distribution, red blood cells.

Involved in oxygen transport from the lung to the various peripheral tissues. The protein is Hemoglobin subunit beta (HBB) of Sturnus vulgaris (Starling).